A 364-amino-acid polypeptide reads, in one-letter code: Probable dual-specificity RNA methyltransferase RlmN (364 aa).

Residue Glu-107 is the Proton acceptor of the active site. The Radical SAM core domain occupies 113-346 (HEYGNSVCVT…ATIRREQGAD (234 aa)). An intrachain disulfide couples Cys-120 to Cys-351. [4Fe-4S] cluster-binding residues include Cys-127, Cys-131, and Cys-134. Residues 177 to 178 (GE), Ser-209, 232 to 234 (SLH), and Asn-308 contribute to the S-adenosyl-L-methionine site. The active-site S-methylcysteine intermediate is the Cys-351.

This sequence belongs to the radical SAM superfamily. RlmN family. Requires [4Fe-4S] cluster as cofactor.

It is found in the cytoplasm. It catalyses the reaction adenosine(2503) in 23S rRNA + 2 reduced [2Fe-2S]-[ferredoxin] + 2 S-adenosyl-L-methionine = 2-methyladenosine(2503) in 23S rRNA + 5'-deoxyadenosine + L-methionine + 2 oxidized [2Fe-2S]-[ferredoxin] + S-adenosyl-L-homocysteine. The catalysed reaction is adenosine(37) in tRNA + 2 reduced [2Fe-2S]-[ferredoxin] + 2 S-adenosyl-L-methionine = 2-methyladenosine(37) in tRNA + 5'-deoxyadenosine + L-methionine + 2 oxidized [2Fe-2S]-[ferredoxin] + S-adenosyl-L-homocysteine. Specifically methylates position 2 of adenine 2503 in 23S rRNA and position 2 of adenine 37 in tRNAs. Confers resistance to some classes of antibiotics. The polypeptide is Probable dual-specificity RNA methyltransferase RlmN (Staphylococcus saprophyticus subsp. saprophyticus (strain ATCC 15305 / DSM 20229 / NCIMB 8711 / NCTC 7292 / S-41)).